A 438-amino-acid chain; its full sequence is Enolase (438 aa).

Positions 159 and 168 each coordinate substrate. Residue glutamate 211 is the Proton donor of the active site. Mg(2+) contacts are provided by aspartate 246, glutamate 297, and aspartate 322. Positions 297 and 322 each coordinate substrate. Lysine 347 acts as the Proton acceptor in catalysis. Substrate-binding positions include 374-377 (SHRS) and lysine 398.

It belongs to the enolase family. In terms of assembly, homodimer. Mg(2+) is required as a cofactor.

It localises to the cytoplasm. It carries out the reaction (2R)-2-phosphoglycerate = phosphoenolpyruvate + H2O. It participates in carbohydrate degradation; glycolysis; pyruvate from D-glyceraldehyde 3-phosphate: step 4/5. The sequence is that of Enolase (ENO1) from Cryphonectria parasitica (Chestnut blight fungus).